We begin with the raw amino-acid sequence, 382 residues long: Methylthioribose-1-phosphate isomerase (382 aa).

Aspartate 257 serves as the catalytic Proton donor.

This sequence belongs to the eIF-2B alpha/beta/delta subunits family. MtnA subfamily.

The protein localises to the cytoplasm. It localises to the nucleus. The catalysed reaction is 5-(methylsulfanyl)-alpha-D-ribose 1-phosphate = 5-(methylsulfanyl)-D-ribulose 1-phosphate. It functions in the pathway amino-acid biosynthesis; L-methionine biosynthesis via salvage pathway; L-methionine from S-methyl-5-thio-alpha-D-ribose 1-phosphate: step 1/6. Its function is as follows. Catalyzes the interconversion of methylthioribose-1-phosphate (MTR-1-P) into methylthioribulose-1-phosphate (MTRu-1-P). The sequence is that of Methylthioribose-1-phosphate isomerase from Paracoccidioides brasiliensis (strain Pb18).